A 244-amino-acid chain; its full sequence is tRNA pseudouridine synthase B (244 aa).

Residue aspartate 46 is the Nucleophile of the active site.

This sequence belongs to the pseudouridine synthase TruB family. Type 1 subfamily.

The catalysed reaction is uridine(55) in tRNA = pseudouridine(55) in tRNA. In terms of biological role, responsible for synthesis of pseudouridine from uracil-55 in the psi GC loop of transfer RNAs. This is tRNA pseudouridine synthase B from Bordetella avium (strain 197N).